A 164-amino-acid polypeptide reads, in one-letter code: MAQITFKQEPITLLGSQVKTGETAPEFTLLDNDLNEVNLSTYDGQKKLISVVPSIDTGVCDQQTRKFNEEASQEDGVVLTVSVDLPFAQKRWCASNGLDNVITLSDHKDLSFGKNYGVVMEELRLLARSVFVLDKNNKVVYSEIVSEGTDFPDFESALEAYRNI.

A Thioredoxin domain is found at 18–163; sequence VKTGETAPEF…FESALEAYRN (146 aa). The Cysteine sulfenic acid (-SOH) intermediate role is filled by C60. Residues C60 and C93 are joined by a disulfide bond.

The protein belongs to the peroxiredoxin family. Tpx subfamily. In terms of assembly, homodimer.

It carries out the reaction a hydroperoxide + [thioredoxin]-dithiol = an alcohol + [thioredoxin]-disulfide + H2O. Its function is as follows. Thiol-specific peroxidase that catalyzes the reduction of hydrogen peroxide and organic hydroperoxides to water and alcohols, respectively. Plays a role in cell protection against oxidative stress by detoxifying peroxides. The chain is Thiol peroxidase from Staphylococcus saprophyticus subsp. saprophyticus (strain ATCC 15305 / DSM 20229 / NCIMB 8711 / NCTC 7292 / S-41).